Consider the following 266-residue polypeptide: Undecaprenyl-diphosphatase (266 aa).

The next 8 helical transmembrane spans lie at 1–21 (MTLT…FLPI), 39–59 (QGLA…MIYF), 87–107 (WWVI…KAFI), 111–131 (ARSA…LWYA), 150–172 (LIVG…ITMT), 187–207 (FSFL…TLDL), 218–238 (ALIV…YLFL), and 244–264 (IGML…LLFV).

The protein belongs to the UppP family.

It localises to the cell inner membrane. It catalyses the reaction di-trans,octa-cis-undecaprenyl diphosphate + H2O = di-trans,octa-cis-undecaprenyl phosphate + phosphate + H(+). Catalyzes the dephosphorylation of undecaprenyl diphosphate (UPP). Confers resistance to bacitracin. This chain is Undecaprenyl-diphosphatase, found in Pseudoalteromonas atlantica (strain T6c / ATCC BAA-1087).